Reading from the N-terminus, the 216-residue chain is Pyridoxine/pyridoxamine 5'-phosphate oxidase (216 aa).

Residues 65–70, 80–81, arginine 86, lysine 87, and glutamine 109 contribute to the FMN site; these read RMVLLK and YT. Lysine 70 lines the substrate pocket. Residues tyrosine 127, arginine 131, and serine 135 each contribute to the substrate site. Residues 144–145 and tryptophan 189 each bind FMN; that span reads QS. Position 195 to 197 (195 to 197) interacts with substrate; that stretch reads RLH. Position 199 (arginine 199) interacts with FMN.

The protein belongs to the pyridoxamine 5'-phosphate oxidase family. In terms of assembly, homodimer. FMN serves as cofactor.

The catalysed reaction is pyridoxamine 5'-phosphate + O2 + H2O = pyridoxal 5'-phosphate + H2O2 + NH4(+). The enzyme catalyses pyridoxine 5'-phosphate + O2 = pyridoxal 5'-phosphate + H2O2. Its pathway is cofactor metabolism; pyridoxal 5'-phosphate salvage; pyridoxal 5'-phosphate from pyridoxamine 5'-phosphate: step 1/1. It participates in cofactor metabolism; pyridoxal 5'-phosphate salvage; pyridoxal 5'-phosphate from pyridoxine 5'-phosphate: step 1/1. In terms of biological role, catalyzes the oxidation of either pyridoxine 5'-phosphate (PNP) or pyridoxamine 5'-phosphate (PMP) into pyridoxal 5'-phosphate (PLP). The sequence is that of Pyridoxine/pyridoxamine 5'-phosphate oxidase from Sphingopyxis alaskensis (strain DSM 13593 / LMG 18877 / RB2256) (Sphingomonas alaskensis).